Here is a 378-residue protein sequence, read N- to C-terminus: Erythronate-4-phosphate dehydrogenase (378 aa).

Substrate is bound by residues Ser45 and Thr66. Positions 146 and 175 each coordinate NAD(+). Residue Arg208 is part of the active site. Residue Asp232 coordinates NAD(+). Glu237 is a catalytic residue. Catalysis depends on His254, which acts as the Proton donor. Residue Gly257 coordinates NAD(+). Tyr258 lines the substrate pocket.

Belongs to the D-isomer specific 2-hydroxyacid dehydrogenase family. PdxB subfamily. Homodimer.

It localises to the cytoplasm. The enzyme catalyses 4-phospho-D-erythronate + NAD(+) = (R)-3-hydroxy-2-oxo-4-phosphooxybutanoate + NADH + H(+). Its pathway is cofactor biosynthesis; pyridoxine 5'-phosphate biosynthesis; pyridoxine 5'-phosphate from D-erythrose 4-phosphate: step 2/5. In terms of biological role, catalyzes the oxidation of erythronate-4-phosphate to 3-hydroxy-2-oxo-4-phosphonooxybutanoate. In Escherichia coli O8 (strain IAI1), this protein is Erythronate-4-phosphate dehydrogenase.